Here is a 293-residue protein sequence, read N- to C-terminus: Ribosomal protein L11 methyltransferase (293 aa).

S-adenosyl-L-methionine-binding residues include threonine 145, glycine 166, aspartate 188, and asparagine 230.

It belongs to the methyltransferase superfamily. PrmA family.

Its subcellular location is the cytoplasm. It carries out the reaction L-lysyl-[protein] + 3 S-adenosyl-L-methionine = N(6),N(6),N(6)-trimethyl-L-lysyl-[protein] + 3 S-adenosyl-L-homocysteine + 3 H(+). Methylates ribosomal protein L11. This chain is Ribosomal protein L11 methyltransferase, found in Shewanella frigidimarina (strain NCIMB 400).